The primary structure comprises 283 residues: Phospholipid phosphatase 1 (283 aa).

Residues 1-6 (MFDKTR) lie on the Cytoplasmic side of the membrane. The short motif at 5–7 (TRL) is the PDZ-binding; involved in localization to the apical cell membrane element. A helical membrane pass occupies residues 7-27 (LPYVALDVICVLLAGLPFAIL). Residues 28 to 53 (TSRHTPFQRGIFCNDDSIKYPYKEDT) are Extracellular-facing. Residues 54–74 (IPYALLGGIVIPFCIIVMSIG) form a helical membrane-spanning segment. The Cytoplasmic portion of the chain corresponds to 75–88 (ESLSVYFNVLHSNS). A helical transmembrane segment spans residues 89–109 (FVGNPYIATIYKAVGAFLFGV). Residues 110 to 164 (SASQSLTDIAKYTIGSLRPHFLAICNPDWSKINCSDGYIEDYICQGNEEKVKEGR) are Extracellular-facing. The phosphatase sequence motif I stretch occupies residues 120-128 (KYTIGSLRP). A glycan (N-linked (GlcNAc...) asparagine) is linked at Asn142. Residues 165–185 (LSFYSGHSSFSMYCMLFVALY) form a helical membrane-spanning segment. The tract at residues 168–171 (YSGH) is phosphatase sequence motif II. The Proton donors role is filled by His171. Over 186 to 199 (LQARMKGDWARLLR) the chain is Cytoplasmic. The chain crosses the membrane as a helical span at residues 200–220 (PMLQFGLIAFSIYVGLSRVSD). The phosphatase sequence motif III stretch occupies residues 216 to 227 (SRVSDYKHHWSD). Over 221–229 (YKHHWSDVT) the chain is Extracellular. The active-site Nucleophile is the His223. Residues 230-250 (VGLIQGAAMAILVALYVSDFF) traverse the membrane as a helical segment. Residues 251–283 (KDTHSYKERKEEDPHTTLHETASSRNYSTNHEP) are Cytoplasmic-facing. The disordered stretch occupies residues 260 to 283 (KEEDPHTTLHETASSRNYSTNHEP). Residues 269 to 283 (HETASSRNYSTNHEP) are compositionally biased toward polar residues.

It belongs to the PA-phosphatase related phosphoesterase family. In terms of assembly, forms functional homodimers and homooligomers that are not required for substrate recognition and catalytic activity. Can also form heterooligomers with PLPP2 and PLPP3. Post-translationally, N-glycosylated. N-linked sugars are of the complex type. N-glycosylation is not required for the phosphatase activity. In terms of tissue distribution, widely expressed. Highly expressed in kidney and lung. Almost undetectable in brain, heart, bone, muscle or spleen.

Its subcellular location is the cell membrane. It is found in the apical cell membrane. The protein resides in the membrane raft. The protein localises to the membrane. It localises to the caveola. The enzyme catalyses a 1,2-diacyl-sn-glycero-3-phosphate + H2O = a 1,2-diacyl-sn-glycerol + phosphate. It catalyses the reaction 1,2-dihexadecanoyl-sn-glycero-3-phosphate + H2O = 1,2-dihexadecanoyl-sn-glycerol + phosphate. The catalysed reaction is 1,2-di-(9Z-octadecenoyl)-sn-glycero-3-phosphate + H2O = 1,2-di-(9Z-octadecenoyl)-sn-glycerol + phosphate. It carries out the reaction a monoacyl-sn-glycero-3-phosphate + H2O = a monoacylglycerol + phosphate. The enzyme catalyses (9Z)-octadecenoyl-sn-glycero-3-phosphate + H2O = (9Z-octadecenoyl)-glycerol + phosphate. It catalyses the reaction a 1-acyl-sn-glycero-3-phosphate + H2O = a 1-acyl-sn-glycerol + phosphate. The catalysed reaction is 1-(9Z-octadecenoyl)-sn-glycero-3-phosphate + H2O = 1-(9Z-octadecenoyl)-sn-glycerol + phosphate. It carries out the reaction a 1,2-diacyl-sn-glycerol 3-diphosphate + H2O = a 1,2-diacyl-sn-glycero-3-phosphate + phosphate + H(+). The enzyme catalyses sphing-4-enine 1-phosphate + H2O = sphing-4-enine + phosphate. It catalyses the reaction an N-acylsphing-4-enine 1-phosphate + H2O = an N-acylsphing-4-enine + phosphate. The catalysed reaction is N-(octanoyl)-sphing-4-enine-1-phosphate + H2O = N-octanoylsphing-4-enine + phosphate. It carries out the reaction N-(9Z-octadecenoyl)-ethanolamine phosphate + H2O = N-(9Z-octadecenoyl) ethanolamine + phosphate. The enzyme catalyses 1-hexadecanoyl-2-(9Z-octadecenoyl)-sn-glycero-3-phosphate + H2O = 1-hexadecanoyl-2-(9Z-octadecenoyl)-sn-glycerol + phosphate. It participates in lipid metabolism; phospholipid metabolism. Its activity is regulated as follows. Magnesium-independent phospholipid phosphatase. Insensitive to N-ethylmaleimide. Functionally, magnesium-independent phospholipid phosphatase of the plasma membrane that catalyzes the dephosphorylation of a variety of glycerolipid and sphingolipid phosphate esters including phosphatidate/PA, lysophosphatidate/LPA, diacylglycerol pyrophosphate/DGPP, sphingosine 1-phosphate/S1P and ceramide 1-phosphate/C1P. Also acts on N-oleoyl ethanolamine phosphate/N-(9Z-octadecenoyl)-ethanolamine phosphate, a potential physiological compound. Through its extracellular phosphatase activity allows both the hydrolysis and the cellular uptake of these bioactive lipid mediators from the milieu, regulating signal transduction in different cellular processes. It is for instance essential for the extracellular hydrolysis of S1P and subsequent conversion into intracellular S1P. Involved in the regulation of inflammation, platelets activation, cell proliferation and migration among other processes. May also have an intracellular activity to regulate phospholipid-mediated signaling pathways. The sequence is that of Phospholipid phosphatase 1 from Mus musculus (Mouse).